We begin with the raw amino-acid sequence, 526 residues long: Vang-like protein 1 (526 aa).

The span at 1-15 (MDTESTYSGYSYYSS) shows a compositional bias: low complexity. Residues 1–87 (MDTESTYSGY…TTAITGTSEH (87 aa)) form a disordered region. Over 1-114 (MDTESTYSGY…VGLDCKRYLG (114 aa)) the chain is Cytoplasmic. Over residues 75–87 (GETTTAITGTSEH) the composition is skewed to polar residues. Residues serine 88 and serine 90 each carry the phosphoserine modification. A helical transmembrane segment spans residues 115-135 (LTVASFLGLLVFLTPIAFILL). The Extracellular portion of the chain corresponds to 136–153 (PQILWREELKPCGAICEG). The chain crosses the membrane as a helical span at residues 154-174 (LLISVSFKLLILLIGTWALFF). Topologically, residues 175-184 (RKQRADVPRV) are cytoplasmic. A helical transmembrane segment spans residues 185–205 (FVFRALLLVLIFLFVVSYWLF). Topologically, residues 206–224 (YGVRILDSRDQNYKDIVQY) are extracellular. The chain crosses the membrane as a helical span at residues 225–245 (AVSLVDALLFIHYLAIVLLEL). Over 246-526 (RQLQPMFTLQ…VLRLQSETSV (281 aa)) the chain is Cytoplasmic.

This sequence belongs to the Vang family. As to quaternary structure, heterodimer with Vangl2. Interacts through its C-terminal region with the N-terminal half of DVL1, DVL2 and DVL3. The PDZ domain of DVL1, DVL2 and DVL3 is required for the interaction.

It localises to the cell membrane. This chain is Vang-like protein 1 (Vangl1), found in Mus musculus (Mouse).